A 101-amino-acid polypeptide reads, in one-letter code: Chaperone modulatory protein CbpM (101 aa).

Belongs to the CbpM family.

Its function is as follows. Interacts with CbpA and inhibits both the DnaJ-like co-chaperone activity and the DNA binding activity of CbpA. Together with CbpA, modulates the activity of the DnaK chaperone system. Does not inhibit the co-chaperone activity of DnaJ. The sequence is that of Chaperone modulatory protein CbpM from Salmonella arizonae (strain ATCC BAA-731 / CDC346-86 / RSK2980).